Reading from the N-terminus, the 56-residue chain is Lantibiotic subtilin (56 aa).

Positions M1–Q24 are excised as a propeptide. Position 25 is an N2-succinyltryptophan; partial (W25). Residues S27–C31 constitute a cross-link (lanthionine (Ser-Cys)). S29 is subject to 2,3-didehydroalanine (Ser). 4 cross-links (beta-methyllanthionine (Thr-Cys)) span residues T32–C35, T37–C43, T47–C50, and T49–C52. A (Z)-2,3-didehydrobutyrine modification is found at T42. Position 55 is a 2,3-didehydroalanine (Ser) (S55).

It belongs to the type A lantibiotic family. Maturation of lantibiotics involves the enzymatic conversion of Thr, and Ser into dehydrated AA and the formation of thioether bonds with cysteine. This is followed by membrane translocation and cleavage of the modified precursor. Post-translationally, succinylated subtilin is 10-20 times less active than subtilin. The ratio subtilin/succinylated subtilin is about 1:2 after 24 hours growth. In terms of processing, the 2,3-didehydrobutyrine is determined to be the Z-isomer.

Its function is as follows. Lanthionine-containing peptide antibiotic (lantibiotic) active on Gram-positive bacteria. The bactericidal activity of lantibiotics is based on depolarization of energized bacterial cytoplasmic membranes, initiated by the formation of aqueous transmembrane pores. The protein is Lantibiotic subtilin (spaS) of Bacillus subtilis.